The sequence spans 121 residues: Large ribosomal subunit protein bL12 (121 aa).

Belongs to the bacterial ribosomal protein bL12 family. Homodimer. Part of the ribosomal stalk of the 50S ribosomal subunit. Forms a multimeric L10(L12)X complex, where L10 forms an elongated spine to which 2 to 4 L12 dimers bind in a sequential fashion. Binds GTP-bound translation factors.

Forms part of the ribosomal stalk which helps the ribosome interact with GTP-bound translation factors. Is thus essential for accurate translation. This chain is Large ribosomal subunit protein bL12, found in Limosilactobacillus fermentum (strain NBRC 3956 / LMG 18251) (Lactobacillus fermentum).